The chain runs to 449 residues: Cyclin-B1-1 (449 aa).

2 disordered regions span residues 1–34 and 90–143; these read MATR…VAGR and AVAP…SVRK. 2 stretches are compositionally biased toward low complexity: residues 90 to 102 and 121 to 134; these read AVAP…PAQR and EISS…RQQS.

Belongs to the cyclin family. Cyclin AB subfamily.

The sequence is that of Cyclin-B1-1 (CYCB1-1) from Oryza sativa subsp. japonica (Rice).